A 428-amino-acid chain; its full sequence is Phosphomethylpyrimidine synthase (428 aa).

Substrate is bound by residues asparagine 66, methionine 95, tyrosine 124, histidine 163, 185–187 (SRG), 226–229 (DGLR), and glutamate 265. Zn(2+) is bound at residue histidine 269. Residue tyrosine 292 coordinates substrate. Residue histidine 333 participates in Zn(2+) binding. 3 residues coordinate [4Fe-4S] cluster: cysteine 407, cysteine 410, and cysteine 414.

This sequence belongs to the ThiC family. [4Fe-4S] cluster serves as cofactor.

It carries out the reaction 5-amino-1-(5-phospho-beta-D-ribosyl)imidazole + S-adenosyl-L-methionine = 4-amino-2-methyl-5-(phosphooxymethyl)pyrimidine + CO + 5'-deoxyadenosine + formate + L-methionine + 3 H(+). The protein operates within cofactor biosynthesis; thiamine diphosphate biosynthesis. Functionally, catalyzes the synthesis of the hydroxymethylpyrimidine phosphate (HMP-P) moiety of thiamine from aminoimidazole ribotide (AIR) in a radical S-adenosyl-L-methionine (SAM)-dependent reaction. The protein is Phosphomethylpyrimidine synthase of Thermococcus kodakarensis (strain ATCC BAA-918 / JCM 12380 / KOD1) (Pyrococcus kodakaraensis (strain KOD1)).